Consider the following 371-residue polypeptide: Probable protein phosphatase 2C 11 (371 aa).

Residues 29–49 (FFFFLFNSQTISSFIIFYLFL) form a helical membrane-spanning segment. Positions 67 to 95 (PPLSVAPLRGDANSPPPESSSSPATKSSL) are disordered. Over residues 85 to 94 (SSSSPATKSS) the composition is skewed to low complexity. Residues 123 to 368 (SYGYSSLKGK…DNITCIVVRF (246 aa)) form the PPM-type phosphatase domain. Residues D159, G160, D320, and D359 each coordinate Mn(2+).

The protein belongs to the PP2C family. Mg(2+) serves as cofactor. Requires Mn(2+) as cofactor.

The protein localises to the membrane. It carries out the reaction O-phospho-L-seryl-[protein] + H2O = L-seryl-[protein] + phosphate. It catalyses the reaction O-phospho-L-threonyl-[protein] + H2O = L-threonyl-[protein] + phosphate. The chain is Probable protein phosphatase 2C 11 from Arabidopsis thaliana (Mouse-ear cress).